Consider the following 117-residue polypeptide: Large ribosomal subunit protein uL18 (117 aa).

The protein belongs to the universal ribosomal protein uL18 family. Part of the 50S ribosomal subunit; part of the 5S rRNA/L5/L18/L25 subcomplex. Contacts the 5S and 23S rRNAs.

Its function is as follows. This is one of the proteins that bind and probably mediate the attachment of the 5S RNA into the large ribosomal subunit, where it forms part of the central protuberance. The protein is Large ribosomal subunit protein uL18 of Serratia proteamaculans (strain 568).